A 407-amino-acid polypeptide reads, in one-letter code: L-cysteine:1D-myo-inositol 2-amino-2-deoxy-alpha-D-glucopyranoside ligase (407 aa).

Zn(2+) is bound at residue cysteine 43. L-cysteinyl-5'-AMP contacts are provided by residues cysteine 43 to threonine 46, threonine 58, and asparagine 81 to threonine 83. The 'HIGH' region motif lies at isoleucine 45 to histidine 55. Positions glutamine 183–proline 188 match the 'ERGGDP' region motif. Tryptophan 223 provides a ligand contact to L-cysteinyl-5'-AMP. Cysteine 227 serves as a coordination point for Zn(2+). Glycine 245–aspartate 247 lines the L-cysteinyl-5'-AMP pocket. Position 252 (histidine 252) interacts with Zn(2+). Valine 279 contributes to the L-cysteinyl-5'-AMP binding site. A 'KMSKS' region motif is present at residues lysine 285–serine 289.

This sequence belongs to the class-I aminoacyl-tRNA synthetase family. MshC subfamily. Monomer. Zn(2+) serves as cofactor.

It catalyses the reaction 1D-myo-inositol 2-amino-2-deoxy-alpha-D-glucopyranoside + L-cysteine + ATP = 1D-myo-inositol 2-(L-cysteinylamino)-2-deoxy-alpha-D-glucopyranoside + AMP + diphosphate + H(+). Its function is as follows. Catalyzes the ATP-dependent condensation of GlcN-Ins and L-cysteine to form L-Cys-GlcN-Ins. This chain is L-cysteine:1D-myo-inositol 2-amino-2-deoxy-alpha-D-glucopyranoside ligase, found in Streptosporangium roseum (strain ATCC 12428 / DSM 43021 / JCM 3005 / KCTC 9067 / NCIMB 10171 / NRRL 2505 / NI 9100).